Reading from the N-terminus, the 287-residue chain is MAQEKMELDLELPPGTGGSPAEGGGSGGGGGLRRSNSAPLIHGLSDTSPVFQAEAPSARRNSTTFPSRHGLLLPASPVRMHSSRLHQIKQEEGMDLINRETVHEREVQTAMQISHSWEESFSLSDNDVEKSASPKRIDFIPVSPAPSPTRGIGKQCFSPSLQSFVSSNGLPPSPIPSPTTRFTTRRSQSPINCIRPSVLGPLKRKCEMETEYQPKRFFQGITNMLSSDVAQLSDPGVCVSSDTLDGNSSSAGSSCNSPAKVSTTTDSPVSPAQAASPFIPLDELSSK.

The interval 1–44 is disordered; that stretch reads MAQEKMELDLELPPGTGGSPAEGGGSGGGGGLRRSNSAPLIHGL. Residues 15 to 32 are compositionally biased toward gly residues; that stretch reads GTGGSPAEGGGSGGGGGL. Ser35 bears the Phosphoserine mark. Ser37 carries the phosphoserine; by CHEK1 modification. Residue Ser45 is modified to Phosphoserine. Position 47 is a phosphothreonine (Thr47). A phosphoserine mark is found at Ser48, Ser62, and Ser76. Lys89 participates in a covalent cross-link: Glycyl lysine isopeptide (Lys-Gly) (interchain with G-Cter in SUMO1). Phosphoserine is present on residues Ser143 and Ser147. Thr149 is modified (phosphothreonine). Disordered stretches follow at residues 167–189 and 236–287; these read SNGL…RSQS and GVCV…LSSK. Low complexity-rich tracts occupy residues 178–189 and 246–257; these read PTTRFTTRRSQS and GNSSSAGSSCNS. A phosphoserine mark is found at Ser187 and Ser189. A compositionally biased stretch (polar residues) spans 259–270; sequence AKVSTTTDSPVS. Phosphoserine occurs at positions 267, 270, and 276.

Belongs to the FAM122 family. In terms of assembly, interacts with PPP2CA and PPP2R1A. Interacts (via its N-terminus) with PPP2R2A; the interaction is direct and this interaction inhibits PP2A activity. The CHEK1-mediated Ser-37 phosphorylated form interacts with 14-3-3 proteins. Post-translationally, CHEK1-mediated phosphorylation at Ser-37 negatively regulates its ability to inhibit serine/threonine-protein phosphatase 2A (PP2A) activity. Phosphorylation leads to its release from the PP2A complex and its sequestration by 14-3-3 proteins in the cytoplasm resulting in its inability to translocate to the nucleus, where it otherwise inhibits PP2A.

The protein resides in the nucleus. The protein localises to the cytoplasm. Functionally, acts as an inhibitor of serine/threonine-protein phosphatase 2A (PP2A) activity. Inhibits PP2A activity by blocking the substrate binding site on PPP2R2A and the active site of PPP2CA. Potentiates ubiquitin-mediated proteasomal degradation of serine/threonine-protein phosphatase 2A catalytic subunit alpha (PPP2CA). Inhibits PP2A-mediated dephosphorylation of WEE1, promoting ubiquitin-mediated proteolysis of WEE1, thereby releasing G2/M checkpoint. This chain is PPP2R1A-PPP2R2A-interacting phosphatase regulator 1, found in Homo sapiens (Human).